The sequence spans 578 residues: Probable cytochrome c oxidase subunit 1-alpha (578 aa).

Positions 1–21 (MSILNEPQGASAAEDSYENEL) are disordered. The helical transmembrane segment at 44-64 (IGTMYLVTSFAFFVIGGVMAL) threads the bilayer. Residue His-90 participates in Fe(II)-heme a binding. 6 consecutive transmembrane segments (helical) span residues 93 to 113 (IMLL…IMPL), 125 to 145 (LNMF…GGFL), 174 to 194 (LWIM…VNFI), 217 to 237 (VLLT…ALFA), 262 to 282 (LFWF…FGIV), and 294 to 314 (IFGY…SVTV). His-268 and Tyr-272 together coordinate Cu cation. Positions 268-272 (HPEVY) form a cross-link, 1'-histidyl-3'-tyrosine (His-Tyr). Positions 317 and 318 each coordinate Cu cation. A run of 2 helical transmembrane segments spans residues 319 to 339 (MYVT…LIAV) and 363 to 383 (MLWS…GVIL). His-401 contributes to the heme a3 binding site. 3 helical membrane passes run 402-422 (FHYV…HFWW), 437-457 (ITFW…HWLG), and 480-500 (ISTI…YNIW). His-403 contacts Fe(II)-heme a.

This sequence belongs to the heme-copper respiratory oxidase family. Associates with subunits II, III and IV to form cytochrome c oxidase. Cu(2+) serves as cofactor. Requires heme as cofactor.

It is found in the cell membrane. The catalysed reaction is 4 Fe(II)-[cytochrome c] + O2 + 8 H(+)(in) = 4 Fe(III)-[cytochrome c] + 2 H2O + 4 H(+)(out). It participates in energy metabolism; oxidative phosphorylation. Functionally, cytochrome c oxidase is the component of the respiratory chain that catalyzes the reduction of oxygen to water. Subunits 1-3 form the functional core of the enzyme complex. CO I is the catalytic subunit of the enzyme. Electrons originating in cytochrome c are transferred via the copper A center of subunit 2 and heme A of subunit 1 to the bimetallic center formed by heme A3 and copper B. In Streptomyces coelicolor (strain ATCC BAA-471 / A3(2) / M145), this protein is Probable cytochrome c oxidase subunit 1-alpha (ctaD1).